A 796-amino-acid polypeptide reads, in one-letter code: High affinity nerve growth factor receptor (796 aa).

The first 32 residues, 1-32 (MLRGGRRGQLGWHSWAAGPGSLLAWLILASAG), serve as a signal peptide directing secretion. At 33–423 (AAPCPDACCP…TPFGVSVAVG (391 aa)) the chain is on the extracellular side. Disulfide bonds link cysteine 36–cysteine 41 and cysteine 40–cysteine 50. 13 N-linked (GlcNAc...) asparagine glycosylation sites follow: asparagine 67, asparagine 95, asparagine 121, asparagine 188, asparagine 202, asparagine 253, asparagine 262, asparagine 281, asparagine 318, asparagine 323, asparagine 338, asparagine 358, and asparagine 401. 2 LRR repeats span residues 90-113 (LGEL…AFHF) and 116-137 (RLSR…TVQG). An LRRCT domain is found at 148–193 (NPLHCSCALRWLQRWEEEGLGGVPEQKLQCHGQGPLAHMPNASCGV). Cysteine 154 and cysteine 191 form a disulfide bridge. Ig-like C2-type domains follow at residues 194–283 (PTLK…VNVS) and 299–365 (WCIP…LAAN). Cysteine 215 and cysteine 265 form a disulfide bridge. A disulfide bridge connects residues cysteine 300 and cysteine 345. Residues 424–439 (LAVFACLFLSTLLLVL) form a helical membrane-spanning segment. The Cytoplasmic segment spans residues 440–796 (NKCGRRNKFG…APPVYLDVLG (357 aa)). The segment at 469–490 (MTLGGSSLSPTEGKGSGLQGHI) is interaction with SQSTM1. Tyrosine 496 is modified (phosphotyrosine; by autocatalysis). Positions 510–781 (IVLKWELGEG…HSIKDVHARL (272 aa)) constitute a Protein kinase domain. 516–524 (LGEGAFGKV) contributes to the ATP binding site. Residues 537–541 (DKMLV) carry the DXXLL motif. ATP is bound at residue lysine 544. A DXXLL motif is present at residues 607–611 (DAKLL). Aspartate 650 functions as the Proton acceptor in the catalytic mechanism. A phosphotyrosine; by autocatalysis mark is found at tyrosine 676, tyrosine 680, tyrosine 681, and tyrosine 791.

It belongs to the protein kinase superfamily. Tyr protein kinase family. Insulin receptor subfamily. As to quaternary structure, exists in a dynamic equilibrium between monomeric (low affinity) and dimeric (high affinity) structures. Homodimerization is induced by binding of a NGF dimer. Interacts with SQSTM1; bridges NTRK1 to NGFR. Forms a ternary complex with NGFR and KIDINS220; this complex is affected by the expression levels of KIDINS220 and an increase in KIDINS220 expression leads to a decreased association of NGFR and NTRK1. Interacts with SH2D1A; regulates NTRK1. Interacts (phosphorylated upon activation by NGF) with SHC1; mediates SHC1 phosphorylation and activation. Interacts (phosphorylated upon activation by NGF) with PLCG1; mediates PLCG1 phosphorylation and activation. Interacts (phosphorylated) with SH2B1 and SH2B2. Interacts with GRB2. Interacts with PIK3R1. Interacts with FRS2. Interacts with SORT1; may regulate NTRK1 anterograde axonal transport. Interacts with RAB7A. Found in a complex, at least composed of KIDINS220, MAGI2, NTRK1 and RAPGEF2; the complex is mainly formed at late endosomes in a nerve growth factor (NGF)-dependent manner. Interacts with RAPGEF2; the interaction is strengthened after NGF stimulation. Interacts with PTPRS. Interacts with USP36; USP36 does not deubiquitinate NTRK1. Interacts with GGA3. Interacts with TSPAN1; this interaction promotes NTRK1 stability. In terms of processing, ligand-mediated autophosphorylation. Interaction with SQSTM1 is phosphotyrosine-dependent. Autophosphorylation at Tyr-496 mediates interaction and phosphorylation of SHC1. N-glycosylated. Isoform TrkA-I and isoform TrkA-II are N-glycosylated. Post-translationally, ubiquitinated. Undergoes polyubiquitination upon activation; regulated by NGFR. Ubiquitination by NEDD4L leads to degradation. Ubiquitination regulates the internalization of the receptor. Isoform TrkA-I is found in most non-neuronal tissues. Isoform TrkA-II is primarily expressed in neuronal cells. TrkA-III is specifically expressed by pluripotent neural stem and neural crest progenitors.

It localises to the cell membrane. The protein localises to the early endosome membrane. It is found in the late endosome membrane. Its subcellular location is the recycling endosome membrane. It carries out the reaction L-tyrosyl-[protein] + ATP = O-phospho-L-tyrosyl-[protein] + ADP + H(+). Its activity is regulated as follows. The pro-survival signaling effect of NTRK1 in neurons requires its endocytosis into signaling early endosomes and its retrograde axonal transport. This is regulated by different proteins including CFL1, RAC1 and SORT1. NTF3 is unable to induce this signaling probably due to the lability of the NTF3-NTRK1 complex in endosomes. SH2D1A inhibits the autophosphorylation of the receptor, and alters the recruitment and activation of downstream effectors and signaling cascades. Regulated by NGFR. Functionally, receptor tyrosine kinase involved in the development and the maturation of the central and peripheral nervous systems through regulation of proliferation, differentiation and survival of sympathetic and nervous neurons. High affinity receptor for NGF which is its primary ligand. Can also bind and be activated by NTF3/neurotrophin-3. However, NTF3 only supports axonal extension through NTRK1 but has no effect on neuron survival. Upon dimeric NGF ligand-binding, undergoes homodimerization, autophosphorylation and activation. Recruits, phosphorylates and/or activates several downstream effectors including SHC1, FRS2, SH2B1, SH2B2 and PLCG1 that regulate distinct overlapping signaling cascades driving cell survival and differentiation. Through SHC1 and FRS2 activates a GRB2-Ras-MAPK cascade that regulates cell differentiation and survival. Through PLCG1 controls NF-Kappa-B activation and the transcription of genes involved in cell survival. Through SHC1 and SH2B1 controls a Ras-PI3 kinase-AKT1 signaling cascade that is also regulating survival. In absence of ligand and activation, may promote cell death, making the survival of neurons dependent on trophic factors. Resistant to NGF, it constitutively activates AKT1 and NF-kappa-B and is unable to activate the Ras-MAPK signaling cascade. Antagonizes the anti-proliferative NGF-NTRK1 signaling that promotes neuronal precursors differentiation. Isoform TrkA-III promotes angiogenesis and has oncogenic activity when overexpressed. In Homo sapiens (Human), this protein is High affinity nerve growth factor receptor (NTRK1).